An 821-amino-acid chain; its full sequence is MDLAAAAEPGAGSQHLEVRDEVAEKCQKLFLDFLEEFQNSDGEIKYLQLAEELIRPERNTLVVSFVDLEQFNQQLSTTIQEEFYRVYPYLCRALKTFVKDRKEIPLAKDFYVAFQDLPTRHKIRELTSSRIGLLTRISGQVVRTHPVHPELVSGTFLCLDCQTVIKDVEQQFKYTQPNICRNPVCANRRRFLLDTNKSRFVDFQKVRIQETQAELPRGSIPRSLEVILRAEAVESAQAGDKCDFTGTLIVVPDVSKLSTPGARAETDSRVSGVDGYETEGVRGLRALGVRDLSYRLVFLACCVAPTNPRFGGKELRDEEQTAESIKNQMTVKEWEKVFEMSQDKNLYHNLCTSLFPTIHGNDEVKRGVLLMLFGGVPKTTGEGTSLRGDINVCIVGDPSTAKSQFLKHVEEFSPRAVYTSGKASIAAGLTAAVVRDEESHEFVIEAGALMLADNGVCCIDEFDKMDVRDQVAIHEAMEQQTISITKAGVKATLNARTSILAAANPISGHYDRSKSLKQNINLSAPIMSRFDLFFILVDECNEVTDYAIARRIVDLHSRIEDSIDRVYSLDEIRRYLLFARQFKPKISKESEDFIVEQYKRLRQRDGSGVTKSSWRITVRQLESMIRLSEAMARMHCCDEVQPKHVKEAFRLLNKSIIRVETPDVNLDQEEDAQMEVDEGPDGINGHADSPAPASGINGHSEDMNQDSVPKASLRLGFSEYCRISNLIVLHLRKMEEEEDESALKRSELVNWYLKEIESEIDSEEELINKKRIIEKVIYRLTHYDHVLIELTQAGLKGSTEGSESYEEDPYLVVNPNYLLED.

N-acetylmethionine is present on Met1. Phosphoserine occurs at positions 13, 219, and 271. Phosphothreonine is present on Thr278. Residues 346–553 (LYHNLCTSLF…TDYAIARRIV (208 aa)) enclose the MCM domain. His359, Ser399, Thr400, Ala401, Lys402, Ser403, and Asn504 together coordinate ATP. The short motif at 528–531 (SRFD) is the Arginine finger element. ADP-binding residues include Arg619 and Glu622. N6-acetyllysine is present on Lys643. Residues 676–706 (VDEGPDGINGHADSPAPASGINGHSEDMNQD) form a disordered region. Phosphoserine is present on residues Ser689 and Ser762. At Thr791 the chain carries Phosphothreonine.

Belongs to the MCM family. In terms of assembly, component of the MCM2-7 complex. The complex forms a toroidal hexameric ring with the proposed subunit order MCM2-MCM6-MCM4-MCM7-MCM3-MCM5. Component of the CMG helicase complex, a hexameric ring of related MCM2-7 subunits stabilized by CDC45 and the tetrameric GINS complex. May interact with MCM10. Interacts with TIPIN. Interacts with CDT1. Interacts with MCMBP. Interacts with DDI2. In terms of processing, O-glycosylated (O-GlcNAcylated), in a cell cycle-dependent manner.

Its subcellular location is the nucleus. It localises to the chromosome. It catalyses the reaction ATP + H2O = ADP + phosphate + H(+). Its function is as follows. Acts as a component of the MCM2-7 complex (MCM complex) which is the replicative helicase essential for 'once per cell cycle' DNA replication initiation and elongation in eukaryotic cells. Core component of CDC45-MCM-GINS (CMG) helicase, the molecular machine that unwinds template DNA during replication, and around which the replisome is built. The active ATPase sites in the MCM2-7 ring are formed through the interaction surfaces of two neighboring subunits such that a critical structure of a conserved arginine finger motif is provided in trans relative to the ATP-binding site of the Walker A box of the adjacent subunit. The six ATPase active sites, however, are likely to contribute differentially to the complex helicase activity. This Bos taurus (Bovine) protein is DNA replication licensing factor MCM6 (MCM6).